The primary structure comprises 699 residues: SHC SH2 domain-binding protein 1 homolog A (699 aa).

PbH1 repeat units follow at residues Ser-480–Pro-502, Gly-503–Asp-524, and Ile-532–Lys-554. Residues Ala-603 to Glu-627 adopt a coiled-coil conformation.

It localises to the midbody. The protein resides in the cytoplasm. It is found in the cytoskeleton. Its subcellular location is the spindle. May play a role in signaling pathways governing cellular proliferation. The sequence is that of SHC SH2 domain-binding protein 1 homolog A (shcbp1-a) from Xenopus laevis (African clawed frog).